We begin with the raw amino-acid sequence, 292 residues long: MSEISNIINEPIGDRMKRFEAKYDFKIEPQNYFCVRLDGNKFSNFTRKFEKPYDVRFSQAMVMTTIDTINKFGARTGFTQSDEITLIFDKAIPDDFKKHITYNHLFNGRVSKLLSIVSSYVSVRFNHHFRLLTSNLTNIYSQETLELINGGTAIFDARILEFDENNKYEMLNHLIWRSVKDCYRNAVQTYAHHIFGPAKIKYLNREQMIQLIEENTNIVWSNIPLWQKYGVIIKKQLIKTDNVKNSVITSSFKVFSLKLSYNDTMLKFLFDKYFELDKISEYQLEDYPLSII.

This is an uncharacterized protein from Acanthamoeba polyphaga (Amoeba).